The chain runs to 237 residues: Insulin-like growth factor-binding protein 4 (237 aa).

Positions 2 to 82 (EAIHCPPCSE…VHGQGVCMEL (81 aa)) constitute an IGFBP N-terminal domain. 6 disulfide bridges follow: C6–C32, C9–C34, C17–C35, C23–C38, C46–C59, and C53–C79. A glycan (N-linked (GlcNAc...) asparagine) is linked at N104. Disulfide bonds link C110-C117, C153-C183, C194-C205, and C207-C228. Residues 150–228 (QGSCQSELHR…GLEPKGELDC (79 aa)) enclose the Thyroglobulin type-1 domain. S234 carries the post-translational modification Phosphoserine.

Binds IGF2 more than IGF1. Post-translationally, there are two different molecular mass variants (29 kDa and 24 kDa forms). The 29 kDa form was shown to be N-glycosylated. In terms of tissue distribution, detected in adult ewe, liver &gt; kidney &gt; lung &gt;&gt; heart and also in several fetal tissues.

The protein resides in the secreted. IGF-binding proteins prolong the half-life of the IGFs and have been shown to either inhibit or stimulate the growth promoting effects of the IGFs on cell culture. They alter the interaction of IGFs with their cell surface receptors. The polypeptide is Insulin-like growth factor-binding protein 4 (IGFBP4) (Ovis aries (Sheep)).